The chain runs to 120 residues: Large ribosomal subunit protein bL17 (120 aa).

It belongs to the bacterial ribosomal protein bL17 family. Part of the 50S ribosomal subunit. Contacts protein L32.

The protein is Large ribosomal subunit protein bL17 of Geobacillus kaustophilus (strain HTA426).